Here is a 259-residue protein sequence, read N- to C-terminus: Thiazole synthase (259 aa).

K95 (schiff-base intermediate with DXP) is an active-site residue. 1-deoxy-D-xylulose 5-phosphate-binding positions include G156, 182-183, and 204-205; these read AG and AS.

It belongs to the ThiG family. Homotetramer. Forms heterodimers with either ThiH or ThiS.

It is found in the cytoplasm. It catalyses the reaction [ThiS sulfur-carrier protein]-C-terminal-Gly-aminoethanethioate + 2-iminoacetate + 1-deoxy-D-xylulose 5-phosphate = [ThiS sulfur-carrier protein]-C-terminal Gly-Gly + 2-[(2R,5Z)-2-carboxy-4-methylthiazol-5(2H)-ylidene]ethyl phosphate + 2 H2O + H(+). It participates in cofactor biosynthesis; thiamine diphosphate biosynthesis. Functionally, catalyzes the rearrangement of 1-deoxy-D-xylulose 5-phosphate (DXP) to produce the thiazole phosphate moiety of thiamine. Sulfur is provided by the thiocarboxylate moiety of the carrier protein ThiS. In vitro, sulfur can be provided by H(2)S. The polypeptide is Thiazole synthase (Corynebacterium efficiens (strain DSM 44549 / YS-314 / AJ 12310 / JCM 11189 / NBRC 100395)).